The chain runs to 167 residues: ATP synthase subunit b (167 aa).

A helical membrane pass occupies residues 10-30 (TFFFQLANTLIMFLILKHFLF).

It belongs to the ATPase B chain family. In terms of assembly, F-type ATPases have 2 components, F(1) - the catalytic core - and F(0) - the membrane proton channel. F(1) has five subunits: alpha(3), beta(3), gamma(1), delta(1), epsilon(1). F(0) has three main subunits: a(1), b(2) and c(10-14). The alpha and beta chains form an alternating ring which encloses part of the gamma chain. F(1) is attached to F(0) by a central stalk formed by the gamma and epsilon chains, while a peripheral stalk is formed by the delta and b chains.

It localises to the cell membrane. Its function is as follows. F(1)F(0) ATP synthase produces ATP from ADP in the presence of a proton or sodium gradient. F-type ATPases consist of two structural domains, F(1) containing the extramembraneous catalytic core and F(0) containing the membrane proton channel, linked together by a central stalk and a peripheral stalk. During catalysis, ATP synthesis in the catalytic domain of F(1) is coupled via a rotary mechanism of the central stalk subunits to proton translocation. Component of the F(0) channel, it forms part of the peripheral stalk, linking F(1) to F(0). This Alkaliphilus oremlandii (strain OhILAs) (Clostridium oremlandii (strain OhILAs)) protein is ATP synthase subunit b.